The chain runs to 196 residues: Somatotropin (196 aa).

A signal peptide spans 1 to 16; sequence MDKVILVLLMSLGASS. A Pyrrolidone carboxylic acid modification is found at Gln-17. His-35 lines the Zn(2+) pocket. A disulfide bond links Cys-67 and Cys-169. Glu-178 is a binding site for Zn(2+). An intrachain disulfide couples Cys-186 to Cys-194.

This sequence belongs to the somatotropin/prolactin family.

It is found in the secreted. Growth hormone plays an important role in growth control and is involved in the regulation of several anabolic processes. Implicated as an osmoregulatory substance important for seawater adaptation. The protein is Somatotropin (gh) of Takifugu rubripes (Japanese pufferfish).